Here is a 219-residue protein sequence, read N- to C-terminus: NADH-quinone oxidoreductase subunit C (219 aa).

Belongs to the complex I 30 kDa subunit family. NDH-1 is composed of 14 different subunits. Subunits NuoB, C, D, E, F, and G constitute the peripheral sector of the complex.

The protein localises to the cell inner membrane. The catalysed reaction is a quinone + NADH + 5 H(+)(in) = a quinol + NAD(+) + 4 H(+)(out). In terms of biological role, NDH-1 shuttles electrons from NADH, via FMN and iron-sulfur (Fe-S) centers, to quinones in the respiratory chain. The immediate electron acceptor for the enzyme in this species is believed to be ubiquinone. Couples the redox reaction to proton translocation (for every two electrons transferred, four hydrogen ions are translocated across the cytoplasmic membrane), and thus conserves the redox energy in a proton gradient. This is NADH-quinone oxidoreductase subunit C from Methylorubrum populi (strain ATCC BAA-705 / NCIMB 13946 / BJ001) (Methylobacterium populi).